The following is a 1402-amino-acid chain: DNA-directed RNA polymerase subunit beta' (1402 aa).

Zn(2+) is bound by residues C72, C74, C87, and C90. Residues D463, D465, and D467 each contribute to the Mg(2+) site. Residues C811, C885, C892, and C895 each contribute to the Zn(2+) site.

The protein belongs to the RNA polymerase beta' chain family. In terms of assembly, the RNAP catalytic core consists of 2 alpha, 1 beta, 1 beta' and 1 omega subunit. When a sigma factor is associated with the core the holoenzyme is formed, which can initiate transcription. It depends on Mg(2+) as a cofactor. Zn(2+) is required as a cofactor.

It carries out the reaction RNA(n) + a ribonucleoside 5'-triphosphate = RNA(n+1) + diphosphate. Its function is as follows. DNA-dependent RNA polymerase catalyzes the transcription of DNA into RNA using the four ribonucleoside triphosphates as substrates. This Paracoccus denitrificans (strain Pd 1222) protein is DNA-directed RNA polymerase subunit beta'.